Here is a 164-residue protein sequence, read N- to C-terminus: uncharacterized protein (164 aa).

It localises to the mitochondrion. This is an uncharacterized protein from Arabidopsis thaliana (Mouse-ear cress).